The sequence spans 85 residues: MANHKSALKRIRANRAKYLRNRYQMKTTRTFVKRLRASTVKADANELYKKVSGMLDKLAKRNIIHKNNAANKKSKLAKFVNKLAA.

It belongs to the bacterial ribosomal protein bS20 family.

Its function is as follows. Binds directly to 16S ribosomal RNA. The protein is Small ribosomal subunit protein bS20 of Cytophaga hutchinsonii (strain ATCC 33406 / DSM 1761 / CIP 103989 / NBRC 15051 / NCIMB 9469 / D465).